The primary structure comprises 250 residues: Golgi SNAP receptor complex member 1 (250 aa).

At alanine 2 the chain carries N-acetylalanine. Residues 2–229 (AAGTSSYWED…QRINLRKRRD (228 aa)) lie on the Cytoplasmic side of the membrane. A coiled-coil region spans residues 9-30 (WEDLRKQARQLENELDLKLVSF). The tract at residues 38–59 (SHSSTRDGRRDRYSSDTTPLLN) is disordered. Residues 41–51 (STRDGRRDRYS) are compositionally biased toward basic and acidic residues. Residues 68–95 (ETMAIEIEQLLARLTGVNDKMAEYTNSA) are a coiled coil. Serine 141 carries the post-translational modification Phosphoserine. A helical; Anchor for type IV membrane protein membrane pass occupies residues 230-250 (SLILGGVIGICTILLLLYAFH).

Belongs to the GOSR1 family. Component of several multiprotein Golgi SNARE complexes. Identified in a SNARE complex with BET1, STX5 and YKT6, in a SNARE complex with BET1L, STX5 and YKT6, in a SNARE complex with STX5, GOSR2, SEC22B and BET1, and in complex with STX5 and COG3. Interacts with GABARAPL2.

Its subcellular location is the golgi apparatus membrane. In terms of biological role, involved in transport from the ER to the Golgi apparatus as well as in intra-Golgi transport. It belongs to a super-family of proteins called t-SNAREs or soluble NSF (N-ethylmaleimide-sensitive factor) attachment protein receptor. May play a protective role against hydrogen peroxide induced cytotoxicity under glutathione depleted conditions in neuronal cells by regulating the intracellular ROS levels via inhibition of p38 MAPK (MAPK11, MAPK12, MAPK13 and MAPK14). Participates in docking and fusion stage of ER to cis-Golgi transport. Plays an important physiological role in VLDL-transport vesicle-Golgi fusion and thus in VLDL delivery to the hepatic cis-Golgi. The protein is Golgi SNAP receptor complex member 1 (GOSR1) of Homo sapiens (Human).